The sequence spans 358 residues: Trace amine-associated receptor 7a (358 aa).

At 1–47 (MDKLVDNFLSGQSRTMSEDLLSASSPQLCYENLNGSCIRSPYSPGPR) the chain is on the extracellular side. The N-linked (GlcNAc...) asparagine glycan is linked to asparagine 34. 2 cysteine pairs are disulfide-bonded: cysteine 37–cysteine 201 and cysteine 120–cysteine 205. Residues 48-68 (LILYAVFGFGAVLAVCGNLLV) form a helical membrane-spanning segment. Over 69–83 (MTSILHFRQLHSPAN) the chain is Cytoplasmic. A helical transmembrane segment spans residues 84–104 (FLVASLACADFLVGLTVMPFS). The Extracellular segment spans residues 105–121 (TVRSVEGCWYFGDTYCK). A helical membrane pass occupies residues 122–143 (FHSCFEGSFCYSSIFHLCFISV). Topologically, residues 144–166 (DRYIAVSDPLIYPTRFTASVSGK) are cytoplasmic. Residues 167–187 (CITFSWLLSIIYSFSLLYTGA) traverse the membrane as a helical segment. Residues 188 to 212 (NEAGLEDLVSALTCVGGCQIAVNQS) lie on the Extracellular side of the membrane. Asparagine 210 is a glycosylation site (N-linked (GlcNAc...) asparagine). The helical transmembrane segment at 213 to 233 (WVFINFLLFLVPTLVMMTVYS) threads the bilayer. Topologically, residues 234–274 (KIFLIAKQQAQNIEKMSKQTTRASESYKDRVAKRERKAAKT) are cytoplasmic. The chain crosses the membrane as a helical span at residues 275–295 (LGIAVAAFLLSWLPYFIDSII). Residues 296–309 (DAFLGFITPTYVYE) are Extracellular-facing. The chain crosses the membrane as a helical span at residues 310 to 333 (ILVWIAYYNSAMNPLIYAFFYPWF). Residues 334–358 (RKAIKLIVTGKILRQNSSVTNLFPE) are Cytoplasmic-facing.

Belongs to the G-protein coupled receptor 1 family.

It localises to the cell membrane. Functionally, olfactory receptor specific for N,N-dimethylalkylamines trace amines. Trace amine compounds are enriched in animal body fluids and act on trace amine-associated receptors (TAARs) to elicit both intraspecific and interspecific innate behaviors. Ligand-binding causes a conformation change that triggers signaling via G(s)-class of G alpha proteins (GNAL or GNAS). The protein is Trace amine-associated receptor 7a of Rattus norvegicus (Rat).